The primary structure comprises 638 residues: Probable potassium transport system protein Kup (638 aa).

Positions Met-1 to His-20 are disordered. 12 helical membrane-spanning segments follow: residues Ile-24–Leu-44, Ile-67–Ile-87, Ala-115–Ile-135, Pro-153–Met-173, Val-181–Ile-201, Leu-228–Tyr-248, Trp-263–Leu-283, Leu-301–Ile-321, Ile-353–Phe-373, Ala-382–Val-402, Ala-413–Val-433, and Ile-435–Thr-455.

It belongs to the HAK/KUP transporter (TC 2.A.72) family.

It is found in the cell inner membrane. It catalyses the reaction K(+)(in) + H(+)(in) = K(+)(out) + H(+)(out). In terms of biological role, transport of potassium into the cell. Likely operates as a K(+):H(+) symporter. The protein is Probable potassium transport system protein Kup of Azoarcus sp. (strain BH72).